The chain runs to 136 residues: Group 1 truncated hemoglobin GlbN (136 aa).

H81 provides a ligand contact to heme.

The protein belongs to the truncated hemoglobin family. Group I subfamily. Homodimer. Heme is required as a cofactor.

In terms of biological role, binds oxygen cooperatively with very high affinity because of a fast combination and a slow dissociation rate. The polypeptide is Group 1 truncated hemoglobin GlbN (glbN) (Mycolicibacterium paratuberculosis (strain ATCC BAA-968 / K-10) (Mycobacterium paratuberculosis)).